Here is a 161-residue protein sequence, read N- to C-terminus: V-type proton ATPase 16 kDa proteolipid subunit c (161 aa).

Residues 1 to 15 (MSYDLATAERAAYAP) are Lumenal-facing. The helical transmembrane segment at 16 to 36 (FFGYMGAASAQIFTVLGAAYG) threads the bilayer. Residues 37-58 (TAKSAVGISSMGVMRPELIMKS) are Cytoplasmic-facing. The helical transmembrane segment at 59–79 (VIPVIMAGIIGIYGLVVAMVL) threads the bilayer. Residues 80 to 98 (RGKVTSASAGYTLDKGFAH) are Lumenal-facing. Residues 99-119 (LAAGLTCGLCGLGAGYAIGIV) form a helical membrane-spanning segment. Residues 120-137 (GDAGVRGTAQQPRLFVGM) are Cytoplasmic-facing. Residues 138-158 (ILILIFSEVLGLYGMIVALIL) form a helical membrane-spanning segment. Over 159–161 (GTS) the chain is Lumenal.

This sequence belongs to the V-ATPase proteolipid subunit family. In terms of assembly, V-ATPase is a heteromultimeric enzyme made up of two complexes: the ATP-hydrolytic V1 complex and the proton translocation V0 complex. The V1 complex consists of three catalytic AB heterodimers that form a heterohexamer, three peripheral stalks each consisting of EG heterodimers, one central rotor including subunits D and F, and the regulatory subunits C and H. The proton translocation complex V0 consists of the proton transport subunit a, a ring of proteolipid subunits c9c'', rotary subunit d, subunits e and f, and the accessory subunits vah-19/Ac45 and vah-20/PRR.

The protein resides in the membrane. Functionally, proton-conducting pore forming subunit of the V0 complex of vacuolar(H+)-ATPase (V-ATPase), a multisubunit enzyme composed of a peripheral complex (V1) that hydrolyzes ATP and a membrane integral complex (V0) that translocates protons. V-ATPase is responsible for acidifying and maintaining the pH of intracellular compartments and in some cell types, is targeted to the plasma membrane, where it is responsible for acidifying the extracellular environment. This Ascaris suum (Pig roundworm) protein is V-type proton ATPase 16 kDa proteolipid subunit c (12).